A 626-amino-acid chain; its full sequence is Two-component response regulator ORR24 (626 aa).

The tract at residues 1–22 (MTVEERQGRVGGHGVSGGGGGR) is disordered. The segment covering 9–22 (RVGGHGVSGGGGGR) has biased composition (gly residues). The 116-residue stretch at 30 to 145 (RVLAVDDDPT…QLRTIWQHVI (116 aa)) folds into the Response regulatory domain. Asp81 carries the 4-aspartylphosphate modification. The segment covering 151 to 162 (DAKNRGNDDDAG) has biased composition (basic and acidic residues). Disordered stretches follow at residues 151 to 215 (DAKN…KKPR) and 402 to 440 (PLES…RTTN). A compositionally biased stretch (acidic residues) spans 191–202 (NGDDGDDSDENS). The myb-like GARP DNA-binding region spans 210–269 (TQKKPRVVWSVELHRKFVAAVNQLGIEKAVPKKILDLMNVENITRENVASHLQKYRLYLK). The segment covering 402-421 (PLESSNQQHLSRVHSSSADP) has biased composition (polar residues).

This sequence belongs to the ARR family. Type-B subfamily. In terms of processing, two-component system major event consists of a His-to-Asp phosphorelay between a sensor histidine kinase (HK) and a response regulator (RR). In plants, the His-to-Asp phosphorelay involves an additional intermediate named Histidine-containing phosphotransfer protein (HPt). This multistep phosphorelay consists of a His-Asp-His-Asp sequential transfer of a phosphate group between first a His and an Asp of the HK protein, followed by the transfer to a conserved His of the HPt protein and finally the transfer to an Asp in the receiver domain of the RR protein.

The protein resides in the nucleus. Transcriptional activator that binds specific DNA sequence. Functions as a response regulator involved in His-to-Asp phosphorelay signal transduction system. Phosphorylation of the Asp residue in the receiver domain activates the ability of the protein to promote the transcription of target genes. May directly activate some type-A response regulators in response to cytokinins. In Oryza sativa subsp. japonica (Rice), this protein is Two-component response regulator ORR24.